Consider the following 489-residue polypeptide: Bridging integrator 2 (489 aa).

The 217-residue stretch at 28-244 folds into the BAR domain; it reads VLQKLGKTVE…MSKLEKQHSN (217 aa). The segment covering 267-302 has biased composition (low complexity); it reads QSCAASSPVSPVSPVSPVTSPTSPSATSEPESVSAT. The disordered stretch occupies residues 267–489; that stretch reads QSCAASSPVS…ASGGLVGLFL (223 aa). Ser-273 carries the post-translational modification Phosphoserine. A compositionally biased stretch (acidic residues) spans 311-331; sequence GGEDSCESQESLKDEEADEAQ. Residue Ser-357 is modified to Phosphoserine. The span at 358–368 shows a compositional bias: low complexity; that stretch reads QEEALSSSAQS. 9 positions are modified to phosphoserine: Ser-380, Ser-392, Ser-420, Ser-422, Ser-424, Ser-430, Ser-435, Ser-439, and Ser-443.

Homodimer. Interacts with BIN1. Interacts with ARHGEF6 (via SH3 domain), ARHGEF7 (via SH3 domain), SH3GL1, SH3GL2 and SH3GL3. Identified in a complex with ARHGEF6 and GIT2.

It is found in the cytoplasm. The protein localises to the cell projection. It localises to the podosome membrane. The protein resides in the cell cortex. Its subcellular location is the phagocytic cup. Functionally, promotes cell motility and migration, probably via its interaction with the cell membrane and with podosome proteins that mediate interaction with the cytoskeleton. Modulates membrane curvature and mediates membrane tubulation. Inhibits phagocytosis. Plays a role in podosome formation. This is Bridging integrator 2 (Bin2) from Mus musculus (Mouse).